Here is a 292-residue protein sequence, read N- to C-terminus: MFTGSIVALITPMDEKGNVCRASLKKLIDYHVANGTSAIVSVGTTGESATLSHDEHADVVMMTLELADGRIPVIAGTGANATSEAISLTQRFNDSGIAGCLTVTPYYNRPTQEGLFQHFKAIAEHTDLPQILYNVPSRTGCDMLPETVGRLSKIKNIVGIKEATGNLSRVHLIKELVNEDFALLSGDDATAMDFMQLGGHGVISVTTNVAARDMADMCRLAAEGKFDDARIINRRLMPLHHKLFVEPNPVPVKWACKELGLVATDTLRLPMTPITDAGRDIVGSALKHAGLL.

T45 serves as a coordination point for pyruvate. Y133 functions as the Proton donor/acceptor in the catalytic mechanism. The active-site Schiff-base intermediate with substrate is K161. I203 is a pyruvate binding site.

This sequence belongs to the DapA family. As to quaternary structure, homotetramer; dimer of dimers.

The protein localises to the cytoplasm. It catalyses the reaction L-aspartate 4-semialdehyde + pyruvate = (2S,4S)-4-hydroxy-2,3,4,5-tetrahydrodipicolinate + H2O + H(+). The protein operates within amino-acid biosynthesis; L-lysine biosynthesis via DAP pathway; (S)-tetrahydrodipicolinate from L-aspartate: step 3/4. Functionally, catalyzes the condensation of (S)-aspartate-beta-semialdehyde [(S)-ASA] and pyruvate to 4-hydroxy-tetrahydrodipicolinate (HTPA). The chain is 4-hydroxy-tetrahydrodipicolinate synthase from Cronobacter sakazakii (strain ATCC BAA-894) (Enterobacter sakazakii).